The chain runs to 306 residues: Beta-lactamase (306 aa).

Residues 1 to 34 form the signal peptide; that stretch reads MNVKRKATLKFGICIGLLCVSFTGFNSLFGSTHA. S89 (acyl-ester intermediate) is an active-site residue. 251-253 contacts substrate; it reads KSG.

This sequence belongs to the class-A beta-lactamase family.

It catalyses the reaction a beta-lactam + H2O = a substituted beta-amino acid. This protein is a beta-lactamase with a substrate specificity for penicillins. The protein is Beta-lactamase (penP) of Bacillus amyloliquefaciens (Bacillus velezensis).